We begin with the raw amino-acid sequence, 283 residues long: Putative S-adenosyl-L-methionine-dependent methyltransferase SCO7813 (283 aa).

S-adenosyl-L-methionine-binding positions include D121 and 150–151; that span reads DL. Positions 264 to 283 are disordered; the sequence is MSTLPQHEDGPGGLISAVRR.

Belongs to the UPF0677 family.

Exhibits S-adenosyl-L-methionine-dependent methyltransferase activity. The sequence is that of Putative S-adenosyl-L-methionine-dependent methyltransferase SCO7813 from Streptomyces coelicolor (strain ATCC BAA-471 / A3(2) / M145).